Consider the following 432-residue polypeptide: Neuronal pentraxin-1 (432 aa).

An N-terminal signal peptide occupies residues 1 to 22 (MPAGRAARTCALLALCLLGAGA). Positions 90-122 (ESQSTLDPGAGEARAGGGRKQPGSGKNTMGDLS) are disordered. Asparagine 154 and asparagine 193 each carry an N-linked (GlcNAc...) asparagine glycan. The Pentraxin (PTX) domain maps to 226–428 (DKFQLTFPLR…GATKWTFEAC (203 aa)). A disulfide bridge links cysteine 256 with cysteine 316. Ca(2+) is bound by residues asparagine 280, glutamate 358, glutamine 359, aspartate 360, and glutamine 370.

In terms of assembly, homooligomer or heterooligomer (probably pentamer) with neuronal pentraxin receptor (NPTXR). Ca(2+) serves as cofactor.

It is found in the secreted. The protein localises to the cytoplasmic vesicle. It localises to the secretory vesicle. The protein resides in the endoplasmic reticulum. In terms of biological role, may be involved in mediating uptake of synaptic material during synapse remodeling or in mediating the synaptic clustering of AMPA glutamate receptors at a subset of excitatory synapses. This Homo sapiens (Human) protein is Neuronal pentraxin-1 (NPTX1).